The sequence spans 681 residues: Dipeptidyl carboxypeptidase (681 aa).

H470 provides a ligand contact to Zn(2+). E471 is a catalytic residue. Zn(2+)-binding residues include H474 and H477.

It belongs to the peptidase M3 family. Requires Zn(2+) as cofactor.

It is found in the cytoplasm. It catalyses the reaction Hydrolysis of unblocked, C-terminal dipeptides from oligopeptides, with broad specificity. Does not hydrolyze bonds in which P1' is Pro, or both P1 and P1' are Gly.. Stimulated by Mn(2+), Mg(2+), Co(2+) and Ca(2+), inhibited by Cu(2+), Ni(2+), Zn(2+), chymostatin and 1,10-phenanthroline. Its function is as follows. Removes dipeptides from the C-termini of N-blocked tripeptides, tetrapeptides and larger peptides. This chain is Dipeptidyl carboxypeptidase, found in Escherichia coli (strain K12).